The chain runs to 320 residues: Ferrochelatase (320 aa).

Residues His-194 and Glu-275 each contribute to the Fe cation site.

This sequence belongs to the ferrochelatase family.

The protein resides in the cytoplasm. It carries out the reaction heme b + 2 H(+) = protoporphyrin IX + Fe(2+). It functions in the pathway porphyrin-containing compound metabolism; protoheme biosynthesis; protoheme from protoporphyrin-IX: step 1/1. Its function is as follows. Catalyzes the ferrous insertion into protoporphyrin IX. This chain is Ferrochelatase, found in Xylella fastidiosa (strain M12).